Reading from the N-terminus, the 202-residue chain is Imidazole glycerol phosphate synthase subunit HisH 2 (202 aa).

In terms of domain architecture, Glutamine amidotransferase type-1 spans 1 to 202 (MIAIIDYGMG…KLMENFIKQA (202 aa)). The active-site Nucleophile is C80. Catalysis depends on residues H183 and E185.

In terms of assembly, heterodimer of HisH and HisF.

It localises to the cytoplasm. It catalyses the reaction 5-[(5-phospho-1-deoxy-D-ribulos-1-ylimino)methylamino]-1-(5-phospho-beta-D-ribosyl)imidazole-4-carboxamide + L-glutamine = D-erythro-1-(imidazol-4-yl)glycerol 3-phosphate + 5-amino-1-(5-phospho-beta-D-ribosyl)imidazole-4-carboxamide + L-glutamate + H(+). The catalysed reaction is L-glutamine + H2O = L-glutamate + NH4(+). It functions in the pathway amino-acid biosynthesis; L-histidine biosynthesis; L-histidine from 5-phospho-alpha-D-ribose 1-diphosphate: step 5/9. In terms of biological role, IGPS catalyzes the conversion of PRFAR and glutamine to IGP, AICAR and glutamate. The HisH subunit provides the glutamine amidotransferase activity that produces the ammonia necessary to HisF for the synthesis of IGP and AICAR. This is Imidazole glycerol phosphate synthase subunit HisH 2 (hisH2) from Methanococcus maripaludis (strain DSM 14266 / JCM 13030 / NBRC 101832 / S2 / LL).